We begin with the raw amino-acid sequence, 221 residues long: MAKVSLFNSKGENIGPIDLKDEVFAIEPNFDVIWRYVDMQLTNARAGTASTKTRGEVSGGGRKPWIQKHTGRARQGSIRAPHWRHGGVAHGPKPRVYFKRLNKKMKRLALKSALSLRLKEGNLIVVDEIKFKRPKTKDLREVLKNLGLENQKVLVVLPKKVEEYVNVKISGRNIPGVKVIIADNPGVDRTNIDGLNVYDILNHDKLVLLQGTVQKIEEVLG.

The disordered stretch occupies residues 48-77; that stretch reads TASTKTRGEVSGGGRKPWIQKHTGRARQGS.

This sequence belongs to the universal ribosomal protein uL4 family. Part of the 50S ribosomal subunit.

Functionally, one of the primary rRNA binding proteins, this protein initially binds near the 5'-end of the 23S rRNA. It is important during the early stages of 50S assembly. It makes multiple contacts with different domains of the 23S rRNA in the assembled 50S subunit and ribosome. In terms of biological role, forms part of the polypeptide exit tunnel. This chain is Large ribosomal subunit protein uL4, found in Thermosipho africanus (strain TCF52B).